We begin with the raw amino-acid sequence, 328 residues long: Putative gluconeogenesis factor (328 aa).

This sequence belongs to the gluconeogenesis factor family.

It localises to the cytoplasm. In terms of biological role, required for morphogenesis under gluconeogenic growth conditions. This chain is Putative gluconeogenesis factor, found in Aquifex aeolicus (strain VF5).